A 127-amino-acid chain; its full sequence is Glycine cleavage system H protein (127 aa).

In terms of domain architecture, Lipoyl-binding spans 22–104; sequence EVVIGITHFA…YEGAWMVKVE (83 aa). N6-lipoyllysine is present on lysine 63.

The protein belongs to the GcvH family. In terms of assembly, the glycine cleavage system is composed of four proteins: P, T, L and H. (R)-lipoate serves as cofactor.

Its function is as follows. The glycine cleavage system catalyzes the degradation of glycine. The H protein shuttles the methylamine group of glycine from the P protein to the T protein. Is also involved in protein lipoylation via its role as an octanoyl/lipoyl carrier protein intermediate. This chain is Glycine cleavage system H protein, found in Bacillus cereus (strain ZK / E33L).